Reading from the N-terminus, the 249-residue chain is Isoprenyl transferase (249 aa).

Asp-29 is a catalytic residue. Residue Asp-29 participates in Mg(2+) binding. Residues 30–33, Trp-34, Arg-42, His-46, and 74–76 contribute to the substrate site; these read GNGR and STE. Asn-77 (proton acceptor) is an active-site residue. Residues Trp-78, Arg-80, Arg-197, and 203 to 205 each bind substrate; that span reads RLS. Glu-216 is a Mg(2+) binding site.

Belongs to the UPP synthase family. As to quaternary structure, homodimer. Requires Mg(2+) as cofactor.

In terms of biological role, catalyzes the condensation of isopentenyl diphosphate (IPP) with allylic pyrophosphates generating different type of terpenoids. The chain is Isoprenyl transferase from Gloeobacter violaceus (strain ATCC 29082 / PCC 7421).